Here is a 324-residue protein sequence, read N- to C-terminus: Probable 6-phosphogluconolactonase 4, chloroplastic (324 aa).

A chloroplast-targeting transit peptide spans methionine 1 to alanine 63. The disordered stretch occupies residues alanine 19–histidine 43.

Belongs to the glucosamine/galactosamine-6-phosphate isomerase family. 6-phosphogluconolactonase subfamily.

It is found in the plastid. The protein resides in the chloroplast. It catalyses the reaction 6-phospho-D-glucono-1,5-lactone + H2O = 6-phospho-D-gluconate + H(+). The protein operates within carbohydrate degradation; pentose phosphate pathway; D-ribulose 5-phosphate from D-glucose 6-phosphate (oxidative stage): step 2/3. Functionally, hydrolysis of 6-phosphogluconolactone to 6-phosphogluconate. This Oryza sativa subsp. japonica (Rice) protein is Probable 6-phosphogluconolactonase 4, chloroplastic.